We begin with the raw amino-acid sequence, 416 residues long: Glutamyl-tRNA reductase (416 aa).

Substrate-binding positions include 49-52 (TCNR), S105, 110-112 (EPQ), and Q116. C50 functions as the Nucleophile in the catalytic mechanism. Position 185–190 (185–190 (GAGETI)) interacts with NADP(+).

This sequence belongs to the glutamyl-tRNA reductase family. As to quaternary structure, homodimer.

It catalyses the reaction (S)-4-amino-5-oxopentanoate + tRNA(Glu) + NADP(+) = L-glutamyl-tRNA(Glu) + NADPH + H(+). It functions in the pathway porphyrin-containing compound metabolism; protoporphyrin-IX biosynthesis; 5-aminolevulinate from L-glutamyl-tRNA(Glu): step 1/2. In terms of biological role, catalyzes the NADPH-dependent reduction of glutamyl-tRNA(Glu) to glutamate 1-semialdehyde (GSA). This chain is Glutamyl-tRNA reductase, found in Shewanella baltica (strain OS185).